A 197-amino-acid polypeptide reads, in one-letter code: FMN-dependent NADH:quinone oxidoreductase (197 aa).

FMN is bound by residues serine 10, 16-18, 93-96, and 137-140; these read SQS, MYNF, and TRGG.

This sequence belongs to the azoreductase type 1 family. In terms of assembly, homodimer. FMN is required as a cofactor.

The enzyme catalyses 2 a quinone + NADH + H(+) = 2 a 1,4-benzosemiquinone + NAD(+). It catalyses the reaction N,N-dimethyl-1,4-phenylenediamine + anthranilate + 2 NAD(+) = 2-(4-dimethylaminophenyl)diazenylbenzoate + 2 NADH + 2 H(+). Quinone reductase that provides resistance to thiol-specific stress caused by electrophilic quinones. Functionally, also exhibits azoreductase activity. Catalyzes the reductive cleavage of the azo bond in aromatic azo compounds to the corresponding amines. This chain is FMN-dependent NADH:quinone oxidoreductase, found in Shewanella frigidimarina (strain NCIMB 400).